Reading from the N-terminus, the 515-residue chain is Microtubule-associated protein 70-4 (515 aa).

2 coiled-coil regions span residues 26–106 (VVDE…ALSA) and 136–351 (LESD…NTSA). Residues 208-410 (LLEKSNRQQV…KQPGSETEAA (203 aa)) are required for targeting to microtubules. The segment at 340–515 (DDMRNESSNT…VKSTKDSCEI (176 aa)) is disordered. The span at 345–362 (ESSNTSASNKDNATSKQA) shows a compositional bias: polar residues. A compositionally biased stretch (low complexity) spans 364-374 (PKRSSSQPRRP). 3 stretches are compositionally biased toward basic and acidic residues: residues 409–425 (AAEK…DSPR), 450–461 (KVADDAGKENKE), and 484–515 (SEHE…SCEI).

Belongs to the MAP70 family.

It is found in the cytoplasm. It localises to the cytoskeleton. Its function is as follows. Plant-specific protein that interact with microtubules. In Oryza sativa subsp. japonica (Rice), this protein is Microtubule-associated protein 70-4 (MAP70.4).